Consider the following 994-residue polypeptide: Zinc finger protein basonuclin-1 (994 aa).

Residues 1 to 29 (MRRRPPSRGGRGAARARETRRQPRHRSGR) form a disordered region. Residues 240-249 (MTFMLPFQFF) are hydrophobic. 2 consecutive C2H2-type zinc fingers follow at residues 357-380 (VFCTACEKTFYDKGTLKIHYNAVH) and 385-414 (HKCTIEGCNMVFSSLRSRNRHSANPNPRLH). Disordered stretches follow at residues 402 to 425 (RNRHSANPNPRLHMPMNRNNRDKD) and 444 to 472 (TVTSPDCRPPPSYPGSGEDSKGQPAFPNI). Positions 533-539 (PKKKSRK) match the Nuclear localization signal motif. A phosphoserine mark is found at S537 and S541. The segment at 555-639 (NEKRHNLSSD…HNSERETEQT (85 aa)) is disordered. Positions 563-578 (SDEDMPLQVVSEDEQE) are enriched in acidic residues. Over residues 603–614 (PEGERPCHRESV) the composition is skewed to basic and acidic residues. The span at 615–630 (IESSGAISQTPEQATH) shows a compositional bias: polar residues. 2 consecutive C2H2-type zinc fingers follow at residues 720 to 743 (FQCDICKKTFKNACSVKIHHKNMH) and 748 to 775 (HTCTVEGCNATFPSRRSRDRHSSNLNLH). Low complexity predominate over residues 859–877 (STTSSMKSESSSHSSWDSD). The tract at residues 859-881 (STTSSMKSESSSHSSWDSDGVSE) is disordered. 2 consecutive C2H2-type zinc fingers follow at residues 928–951 (ITCHLCQKTYSNKGTFRAHYKTVH) and 956–983 (HKCKVPGCNTMFSSVRSRNRHSQNPNLH). Positions 970 to 994 (VRSRNRHSQNPNLHKSLASSPSHLQ) are disordered.

Interacts with HSF2BP (via C-terminus). In terms of processing, phosphorylation on Ser-537 and Ser-541 leads to cytoplasmic localization. In epidermis, primarily detected in cells of the basal or immediately suprabasal layers (at protein level). In hair follicles, mainly expressed in the outer root sheath (at protein level). Expressed in epidermis, testis and foreskin, and to a lower extent in thymus, spleen, mammary glands, placenta, brain and heart. Expressed in the ovary, notably in oocytes.

The protein resides in the nucleus. It is found in the cytoplasm. The protein localises to the nucleoplasm. In terms of biological role, transcriptional activator. It is likely involved in the regulation of keratinocytes terminal differentiation in squamous epithelia and hair follicles. Required for the maintenance of spermatogenesis. It is involved in the positive regulation of oocyte maturation, probably acting through the control of BMP15 levels and regulation of AKT signaling cascade. May also play a role in the early development of embryos. The chain is Zinc finger protein basonuclin-1 (BNC1) from Homo sapiens (Human).